A 267-amino-acid chain; its full sequence is Undecaprenyl-diphosphatase (267 aa).

The next 8 helical transmembrane spans lie at Met1–Ile21, Gln39–Phe59, Ser83–Phe103, Leu111–Val131, Ala149–Ile169, Phe189–Met209, Leu218–Leu238, and Met246–Leu266.

Belongs to the UppP family.

Its subcellular location is the cell inner membrane. It catalyses the reaction di-trans,octa-cis-undecaprenyl diphosphate + H2O = di-trans,octa-cis-undecaprenyl phosphate + phosphate + H(+). Its function is as follows. Catalyzes the dephosphorylation of undecaprenyl diphosphate (UPP). Confers resistance to bacitracin. The polypeptide is Undecaprenyl-diphosphatase (Aliivibrio fischeri (strain MJ11) (Vibrio fischeri)).